Consider the following 221-residue polypeptide: Tumor protein p53-inducible nuclear protein 2 (221 aa).

The LIR signature appears at valine 26 to glutamine 41. The segment at glutamine 41–aspartate 68 is disordered. Pro residues predominate over residues proline 47 to proline 64. Serine 136 bears the Phosphoserine mark. A disordered region spans residues arginine 177 to phenylalanine 210.

As to quaternary structure, interacts with VMP1, GABARAP, GABARAPL1, GABARAPL2, MAP1LC3A, MAP1LC3B, MAP1LC3C and THRA.

It localises to the cytoplasm. Its subcellular location is the cytosol. It is found in the nucleus. The protein localises to the PML body. The protein resides in the cytoplasmic vesicle. It localises to the autophagosome. In terms of biological role, dual regulator of transcription and autophagy. Positively regulates autophagy and is required for autophagosome formation and processing. May act as a scaffold protein that recruits MAP1LC3A, GABARAP and GABARAPL2 and brings them to the autophagosome membrane by interacting with VMP1 where, in cooperation with the BECN1-PI3-kinase class III complex, they trigger autophagosome development. Acts as a transcriptional activator of THRA. In Mus musculus (Mouse), this protein is Tumor protein p53-inducible nuclear protein 2 (Tp53inp2).